The primary structure comprises 228 residues: NAD(P)H-hydrate epimerase (228 aa).

A YjeF N-terminal domain is found at 9–209; sequence VRAVERLAHR…LLGLTPAFLA (201 aa). Residue 53–57 coordinates (6S)-NADPHX; sequence NNGGD. The K(+) site is built by Asn-54 and Asp-115. Residues 119 to 125 and Asp-148 contribute to the (6S)-NADPHX site; that span reads GIGLARP. Ser-151 serves as a coordination point for K(+).

It belongs to the NnrE/AIBP family. K(+) is required as a cofactor.

It carries out the reaction (6R)-NADHX = (6S)-NADHX. The enzyme catalyses (6R)-NADPHX = (6S)-NADPHX. Functionally, catalyzes the epimerization of the S- and R-forms of NAD(P)HX, a damaged form of NAD(P)H that is a result of enzymatic or heat-dependent hydration. This is a prerequisite for the S-specific NAD(P)H-hydrate dehydratase to allow the repair of both epimers of NAD(P)HX. The chain is NAD(P)H-hydrate epimerase from Bordetella pertussis (strain CS).